A 252-amino-acid polypeptide reads, in one-letter code: Chitooligosaccharide deacetylase (252 aa).

Mg(2+) is bound by residues histidine 61 and histidine 125.

This sequence belongs to the YdjC deacetylase family. ChbG subfamily. As to quaternary structure, homodimer. The cofactor is Mg(2+).

Its subcellular location is the cytoplasm. It carries out the reaction N,N'-diacetylchitobiose + H2O = N-acetyl-beta-D-glucosaminyl-(1-&gt;4)-D-glucosamine + acetate. The enzyme catalyses diacetylchitobiose-6'-phosphate + H2O = N'-monoacetylchitobiose-6'-phosphate + acetate. The protein operates within glycan degradation; chitin degradation. In terms of biological role, involved in the degradation of chitin. ChbG is essential for growth on the acetylated chitooligosaccharides chitobiose and chitotriose but is dispensable for growth on cellobiose and chitosan dimer, the deacetylated form of chitobiose. Deacetylation of chitobiose-6-P and chitotriose-6-P is necessary for both the activation of the chb promoter by the regulatory protein ChbR and the hydrolysis of phosphorylated beta-glucosides by the phospho-beta-glucosidase ChbF. Catalyzes the removal of only one acetyl group from chitobiose-6-P to yield monoacetylchitobiose-6-P, the inducer of ChbR and the substrate of ChbF. The sequence is that of Chitooligosaccharide deacetylase from Klebsiella pneumoniae (strain 342).